The following is a 441-amino-acid chain: ATP-dependent protease ATPase subunit HslU (441 aa).

Residues Ile-18, 60 to 65 (GVGKTE), Asp-254, Glu-319, and Arg-391 contribute to the ATP site.

It belongs to the ClpX chaperone family. HslU subfamily. As to quaternary structure, a double ring-shaped homohexamer of HslV is capped on each side by a ring-shaped HslU homohexamer. The assembly of the HslU/HslV complex is dependent on binding of ATP.

The protein localises to the cytoplasm. ATPase subunit of a proteasome-like degradation complex; this subunit has chaperone activity. The binding of ATP and its subsequent hydrolysis by HslU are essential for unfolding of protein substrates subsequently hydrolyzed by HslV. HslU recognizes the N-terminal part of its protein substrates and unfolds these before they are guided to HslV for hydrolysis. The sequence is that of ATP-dependent protease ATPase subunit HslU from Shewanella pealeana (strain ATCC 700345 / ANG-SQ1).